A 111-amino-acid chain; its full sequence is Mitochondrial import inner membrane translocase subunit TIM14 (111 aa).

The Mitochondrial intermembrane portion of the chain corresponds to 1–3 (MTG). Residues 4–24 (GLIAAGLGLAAVGFGARYVLR) traverse the membrane as a helical segment. At 25–111 (NQALIKKGME…AKDLMESTKS (87 aa)) the chain is on the mitochondrial matrix side. The J domain maps to 58-111 (EAAKILGITPSAKPAKIKDAHKKVMIVNHPDRGGSPYLAAKINEAKDLMESTKS).

It belongs to the TIM14 family. As to quaternary structure, probable component of the PAM complex at least composed of a mitochondrial HSP70 protein, GrpE, tim-44, tim-16 and tim-14.

It localises to the mitochondrion inner membrane. Probable component of the PAM complex, a complex required for the translocation of transit peptide-containing proteins from the inner membrane into the mitochondrial matrix in an ATP-dependent manner. May act as a co-chaperone that stimulate the ATP-dependent activity. The sequence is that of Mitochondrial import inner membrane translocase subunit TIM14 (dnj-21) from Caenorhabditis briggsae.